Reading from the N-terminus, the 455-residue chain is Tumor necrosis factor receptor superfamily member 1A (455 aa).

The N-terminal stretch at 1–29 (MGLSTVPDLLLPLVLLELLVGIYPSGVIG) is a signal peptide. Topologically, residues 30 to 211 (LVPHLGDREK…VKGTEDSGTT (182 aa)) are extracellular. TNFR-Cys repeat units lie at residues 43–82 (VCPQGKYIHPQNNSICCTKCHKGTYLYNDCPGPGQDTDCR), 83–125 (ECES…DTVC), 126–166 (GCRK…NTVC), and 167–196 (TCHAGFFLRENECVSCSNCKKSLECTKLCL). Intrachain disulfides connect C44-C58, C59-C72, C62-C81, C84-C99, C102-C117, C105-C125, and C127-C143. N54 carries an N-linked (GlcNAc...) asparagine glycan. 2 N-linked (GlcNAc...) asparagine glycosylation sites follow: N145 and N151. Intrachain disulfides connect C146-C158, C149-C166, C168-C179, C182-C195, and C185-C191. A helical transmembrane segment spans residues 212–232 (VLLPLVIFFGLCLLSLLFIGL). At 233 to 455 (MYRYQRWKSK…ALPPAPSLLR (223 aa)) the chain is on the cytoplasmic side. A disordered region spans residues 254-273 (EKEGELEGTTTKPLAPNPSF). Residues 338–348 (LQKWEDSAHKP) are N-SMase activation domain (NSD). In terms of domain architecture, Death spans 356-441 (PATLYAVVEN…GCLEDIEEAL (86 aa)). R376 carries a (Microbial infection) N-beta-linked (GlcNAc) arginine glycan.

In terms of assembly, binding of TNF to the extracellular domain leads to homotrimerization. The aggregated death domains provide a novel molecular interface that interacts specifically with the death domain of TRADD. Various TRADD-interacting proteins such as TRAFS, RIPK1 and possibly FADD, are recruited to the complex by their association with TRADD. This complex activates at least two distinct signaling cascades, apoptosis and NF-kappa-B signaling. Interacts with BAG4, BABAM2, FEM1B, GRB2, SQSTM1 and TRPC4AP. Interacts directly with NOL3 (via CARD domain); inhibits TNF-signaling pathway. Interacts with SH3RF2, TRADD and RIPK1. SH3RF2 facilitates the recruitment of RIPK1 and TRADD to TNFRSF1A in a TNF-alpha-dependent process. Interacts with PGLYRP1; this interaction is important for cell death induction. Interacts (via death domain) with MADD (via death domain). As to quaternary structure, (Microbial infection) Interacts with mumps virus protein SH; this interaction inhibits downstream NF-kappa-B pathway activation. (Microbial infection) Interacts with HCV core protein. In terms of assembly, (Microbial infection) Interacts with human cytomegalovirus/HHV-5 protein UL138. As to quaternary structure, (Microbial infection) Interacts with host TNFRSF1A; this interaction leads to the stimulation of both surface expression and shedding of TNFRSF1A. In terms of processing, the soluble form is produced from the membrane form by proteolytic processing. (Microbial infection) Glycosylated at Arg-376 by enteropathogenic E.coli protein NleB1 and S.typhimurium protein Ssek3: arginine GlcNAcylation prevents homotypic/heterotypic death domain interactions.

The protein localises to the cell membrane. It localises to the golgi apparatus membrane. It is found in the secreted. Functionally, receptor for TNFSF2/TNF-alpha and homotrimeric TNFSF1/lymphotoxin-alpha. The adapter molecule FADD recruits caspase-8 to the activated receptor. The resulting death-inducing signaling complex (DISC) performs caspase-8 proteolytic activation which initiates the subsequent cascade of caspases (aspartate-specific cysteine proteases) mediating apoptosis. Contributes to the induction of non-cytocidal TNF effects including anti-viral state and activation of the acid sphingomyelinase. The protein is Tumor necrosis factor receptor superfamily member 1A (TNFRSF1A) of Homo sapiens (Human).